Reading from the N-terminus, the 177-residue chain is Cytochrome c oxidase assembly protein CtaG (177 aa).

Over 1–8 (MTQKAKNT) the chain is Cytoplasmic. The chain crosses the membrane as a helical; Signal-anchor for type II membrane protein span at residues 9-29 (IYLLILIILSMLCLVYASVPL). The Periplasmic segment spans residues 30 to 177 (YSIFCKVTGY…TFFKYKETTK (148 aa)).

This sequence belongs to the COX11/CtaG family.

It localises to the cell inner membrane. Exerts its effect at some terminal stage of cytochrome c oxidase synthesis, probably by being involved in the insertion of the copper B into subunit I. This chain is Cytochrome c oxidase assembly protein CtaG, found in Ehrlichia ruminantium (strain Gardel).